The sequence spans 68 residues: Small ribosomal subunit protein eS17 (68 aa).

It belongs to the eukaryotic ribosomal protein eS17 family.

The sequence is that of Small ribosomal subunit protein eS17 from Staphylothermus marinus (strain ATCC 43588 / DSM 3639 / JCM 9404 / F1).